Reading from the N-terminus, the 180-residue chain is Oligoribonuclease (180 aa).

The Exonuclease domain occupies 7-170 (LIWIDLEMTG…DDIRESIAEL (164 aa)). Tyrosine 128 is an active-site residue.

The protein belongs to the oligoribonuclease family.

The protein localises to the cytoplasm. Functionally, 3'-to-5' exoribonuclease specific for small oligoribonucleotides. This chain is Oligoribonuclease, found in Pseudomonas putida (strain ATCC 700007 / DSM 6899 / JCM 31910 / BCRC 17059 / LMG 24140 / F1).